The sequence spans 648 residues: Chaperone protein DnaK (648 aa).

Position 200 is a phosphothreonine; by autocatalysis (T200). The disordered stretch occupies residues 612–631 (QAGAAGAAGAAEGAAQGGAQ).

The protein belongs to the heat shock protein 70 family.

Its function is as follows. Acts as a chaperone. The chain is Chaperone protein DnaK from Burkholderia multivorans (strain ATCC 17616 / 249).